The primary structure comprises 176 residues: NAD(P)H-quinone oxidoreductase subunit 6, chloroplastic (176 aa).

The next 5 helical transmembrane spans lie at 10–30 (FLLV…VLLA), 33–53 (IYSA…YILA), 61–81 (AQLL…VMFI), 92–112 (LWTV…VSLI), and 152–172 (FFLP…GAIA).

It belongs to the complex I subunit 6 family. NDH is composed of at least 16 different subunits, 5 of which are encoded in the nucleus.

The protein localises to the plastid. The protein resides in the chloroplast thylakoid membrane. It carries out the reaction a plastoquinone + NADH + (n+1) H(+)(in) = a plastoquinol + NAD(+) + n H(+)(out). It catalyses the reaction a plastoquinone + NADPH + (n+1) H(+)(in) = a plastoquinol + NADP(+) + n H(+)(out). In terms of biological role, NDH shuttles electrons from NAD(P)H:plastoquinone, via FMN and iron-sulfur (Fe-S) centers, to quinones in the photosynthetic chain and possibly in a chloroplast respiratory chain. The immediate electron acceptor for the enzyme in this species is believed to be plastoquinone. Couples the redox reaction to proton translocation, and thus conserves the redox energy in a proton gradient. The protein is NAD(P)H-quinone oxidoreductase subunit 6, chloroplastic (ndhG) of Guizotia abyssinica (Niger).